The chain runs to 290 residues: 4-hydroxybenzoate octaprenyltransferase (290 aa).

A run of 8 helical transmembrane segments spans residues 23 to 43, 46 to 66, 99 to 119, 141 to 161, 163 to 183, 213 to 233, 234 to 254, and 268 to 288; these read IGAL…TPGV, LWIL…GCVV, LFVV…TMTI, LPQV…FAAV, ESVP…AVAY, LIIG…GELN, GLGW…VYQQ, and AFMN…MSYW.

Belongs to the UbiA prenyltransferase family. Mg(2+) serves as cofactor.

It localises to the cell inner membrane. It carries out the reaction all-trans-octaprenyl diphosphate + 4-hydroxybenzoate = 4-hydroxy-3-(all-trans-octaprenyl)benzoate + diphosphate. The protein operates within cofactor biosynthesis; ubiquinone biosynthesis. Functionally, catalyzes the prenylation of para-hydroxybenzoate (PHB) with an all-trans polyprenyl group. Mediates the second step in the final reaction sequence of ubiquinone-8 (UQ-8) biosynthesis, which is the condensation of the polyisoprenoid side chain with PHB, generating the first membrane-bound Q intermediate 3-octaprenyl-4-hydroxybenzoate. This is 4-hydroxybenzoate octaprenyltransferase from Escherichia coli O6:K15:H31 (strain 536 / UPEC).